Consider the following 946-residue polypeptide: Phosphatidylinositol 4,5-bisphosphate 5-phosphatase INP51 (946 aa).

Positions 151-480 constitute an SAC domain; that stretch reads LKKLFSDGTF…YYWLDRTYTK (330 aa). Disordered stretches follow at residues 872-902 and 927-946; these read SDSI…SDLK and PKRD…FIER. Residues 936–946 are compositionally biased toward acidic residues; sequence ENEDEPLFIER.

This sequence belongs to the synaptojanin family. In the central section; belongs to the inositol 1,4,5-trisphosphate 5-phosphatase family. As to quaternary structure, interacts with IRS4 and TAX4.

It is found in the cytoplasm. The protein resides in the cytoskeleton. It localises to the actin patch. It carries out the reaction a 1,2-diacyl-sn-glycero-3-phospho-(1D-myo-inositol-4,5-bisphosphate) + H2O = a 1,2-diacyl-sn-glycero-3-phospho-(1D-myo-inositol 4-phosphate) + phosphate. IRS4 and TAX4 are both positive regulator of INP51 activity and phosphatidylinositol 4,5-bisphosphate turnover. Functionally, controls the cellular levels and subcellular distribution of phosphatidylinositol 4,5-bisphosphate (PtdIns(4,5)P2). Does not utilize phosphatidylinositol 3,5-bisphosphate (PtdIns(3,5)P2), nor phosphatidylinositol 3-phosphate (PtdIns(3)P) and phosphatidylinositol 4-phosphate (PtdIns(4)P). Plays an essential role in a TGN (trans Golgi network)-to-early endosome pathway. Involved in endocytosis and acts as a negative regulator of the Slm pathway which modulates polarized actin assembly and growth. In Saccharomyces cerevisiae (strain ATCC 204508 / S288c) (Baker's yeast), this protein is Phosphatidylinositol 4,5-bisphosphate 5-phosphatase INP51 (INP51).